The following is a 464-amino-acid chain: Sushi repeat-containing protein SRPX (464 aa).

The first 30 residues, 1–30, serve as a signal peptide directing secretion; sequence MGSPAHRPALLLLLPPLLLLLLLRVPPSRS. A glycan (O-linked (Xyl...) (chondroitin sulfate) serine) is linked at Ser-34. Intrachain disulfides connect Cys-57-Cys-85, Cys-69-Cys-103, Cys-89-Cys-115, Cys-120-Cys-161, and Cys-147-Cys-174. Sushi domains lie at 57 to 117 and 118 to 176; these read CSPI…ICKQ and KRCP…SCVD. In terms of domain architecture, HYR spans 177-259; that stretch reads MEPPRIKCPS…TCKFRVKVRV (83 aa). A Sushi 3 domain is found at 260–319; the sequence is KRCGKLNAPENGYMKCSSDGDNYGATCEFSCIGGYELQGSPARVCQSNLAWSGTEPTCAA. 2 disulfides stabilise this stretch: Cys-262–Cys-304 and Cys-290–Cys-317.

Detected in fibroblasts (at protein level). Retina and heart; less in placenta, pancreas, lung, liver, skeletal muscle, kidney and brain.

It localises to the cell surface. In terms of biological role, may be involved in phagocytosis during disk shedding, cell adhesion to cells other than the pigment epithelium or signal transduction. This chain is Sushi repeat-containing protein SRPX (SRPX), found in Homo sapiens (Human).